The chain runs to 201 residues: Large ribosomal subunit protein uL4 (201 aa).

The segment at Gly39–Ala70 is disordered.

Belongs to the universal ribosomal protein uL4 family. As to quaternary structure, part of the 50S ribosomal subunit.

One of the primary rRNA binding proteins, this protein initially binds near the 5'-end of the 23S rRNA. It is important during the early stages of 50S assembly. It makes multiple contacts with different domains of the 23S rRNA in the assembled 50S subunit and ribosome. In terms of biological role, forms part of the polypeptide exit tunnel. The protein is Large ribosomal subunit protein uL4 of Marinobacter nauticus (strain ATCC 700491 / DSM 11845 / VT8) (Marinobacter aquaeolei).